The sequence spans 995 residues: DExH-box ATP-dependent RNA helicase DExH10 (995 aa).

The disordered stretch occupies residues 1 to 42; that stretch reads MSAQMEEPETLGKRKESESSKLRSDETPTPEPRTKRRSLKRA. Ser-2 is subject to N-acetylserine. Residues 10–26 show a composition bias toward basic and acidic residues; the sequence is TLGKRKESESSKLRSDE. Positions 90 to 246 constitute a Helicase ATP-binding domain; the sequence is VACLERKESI…WICYLHKQPC (157 aa). ATP is bound at residue 103-110; the sequence is AHTSAGKT. The DEIH box signature appears at 194-197; that stretch reads DEIH. Residues 290 to 318 form a disordered region; that stretch reads DTFPKPKSNDGKKSANGKSGGRGAKGGGG. The span at 307 to 318 shows a compositional bias: gly residues; the sequence is KSGGRGAKGGGG. Positions 323-524 constitute a Helicase C-terminal domain; the sequence is DVYKIVKMIM…LSYYTILNLL (202 aa).

It belongs to the DExH box helicase family. SKI2 subfamily. Expressed in inflorescences, leaves, stems, and roots.

It is found in the nucleus. The protein localises to the nucleoplasm. It catalyses the reaction ATP + H2O = ADP + phosphate + H(+). ATP-dependent RNA helicase that associates with the RNA exosome complex, with the cap binding complex (CBC) and with the NEXT-like complex. Involved in the degradation of a large number of non-coding nuclear exosome substrates such as snoRNA and miRNA precursors, incompletely spliced mRNAs, and spurious transcripts produced from pseudogenes and intergenic regions. Involved in the maintenance of homeotic B and C gene expression in the reproductive whorls. Regulates floral organ spacing and identity, probably through the regulation of protein synthesis or mRNA degradation. In Arabidopsis thaliana (Mouse-ear cress), this protein is DExH-box ATP-dependent RNA helicase DExH10.